The chain runs to 342 residues: MIRVLVIDDSLFIRTVVQDMLSDDPDIQIVGVASDGLEALDKIRELKPDLITLDIEMPRLDGLSMLERKKEIDRFPKTLVLSSLTSEGAEMTKRAIALGADDFMLKPRGIKNIREIGGELKHKIKNICTIAYITAKPVLKDSNARNVVLIGSSAGGPPMLDTIVSKLPSDLNAAVIITQHMPKGGFTAALAARLNRISPLQIRETENGDVLKNGTVLVSRAGFHTIISSVLDKGGSQSGKIILTDSPPVHNVKPAVDKTFISAAQVFGNHCVTAILSGMGNDGGEGTEAIKKAGGVTIVCREEDCLVYGMARSALSRNCVDHVLSLQAIPEKIVETIRAMNG.

The Response regulatory domain occupies 3–121 (RVLVIDDSLF…NIREIGGELK (119 aa)). D54 carries the 4-aspartylphosphate modification. Positions 141-340 (DSNARNVVLI…EKIVETIRAM (200 aa)) constitute a CheB-type methylesterase domain. Residues S153, H180, and D282 contribute to the active site.

The protein belongs to the CheB family. In terms of processing, phosphorylated by CheA. Phosphorylation of the N-terminal regulatory domain activates the methylesterase activity.

The protein localises to the cytoplasm. The catalysed reaction is [protein]-L-glutamate 5-O-methyl ester + H2O = L-glutamyl-[protein] + methanol + H(+). It carries out the reaction L-glutaminyl-[protein] + H2O = L-glutamyl-[protein] + NH4(+). Its function is as follows. Involved in chemotaxis. Part of a chemotaxis signal transduction system that modulates chemotaxis in response to various stimuli. Catalyzes the demethylation of specific methylglutamate residues introduced into the chemoreceptors (methyl-accepting chemotaxis proteins or MCP) by CheR. Also mediates the irreversible deamidation of specific glutamine residues to glutamic acid. The sequence is that of Protein-glutamate methylesterase/protein-glutamine glutaminase 1 from Methanospirillum hungatei JF-1 (strain ATCC 27890 / DSM 864 / NBRC 100397 / JF-1).